Here is a 239-residue protein sequence, read N- to C-terminus: Large ribosomal subunit protein uL1 (239 aa).

This sequence belongs to the universal ribosomal protein uL1 family. Part of the 50S ribosomal subunit.

Binds directly to 23S rRNA. The L1 stalk is quite mobile in the ribosome, and is involved in E site tRNA release. Functionally, protein L1 is also a translational repressor protein, it controls the translation of the L11 operon by binding to its mRNA. The sequence is that of Large ribosomal subunit protein uL1 from Rickettsia africae (strain ESF-5).